The following is a 1021-amino-acid chain: Sodium/potassium-transporting ATPase subunit alpha-1 (1021 aa).

Positions 1–5 (MGKGV) are excised as a propeptide. The segment covering 1 to 11 (MGKGVGRDKYE) has biased composition (basic and acidic residues). Residues 1-37 (MGKGVGRDKYEPAAVSEHGDKKKAKKERDMDELKKEV) are disordered. Over 6-85 (GRDKYEPAAV…NALTPPPTTP (80 aa)) the chain is Cytoplasmic. At Lys9 the chain carries N6-acetyllysine. Position 10 is a phosphotyrosine (Tyr10). Ser16 carries the phosphoserine; by PKC modification. Lys21 bears the N6-acetyllysine mark. Residues 26–37 (KERDMDELKKEV) show a composition bias toward basic and acidic residues. 2 positions are modified to phosphoserine: Ser38 and Ser45. The interval 80 to 82 (PPP) is phosphoinositide-3 kinase binding. The chain crosses the membrane as a helical span at residues 86 to 106 (EWVKFCRQLFGGFSMLLWIGA). Over 107 to 129 (ILCFLAYGIQAATEEEPQNDNLY) the chain is Extracellular. The chain crosses the membrane as a helical span at residues 130–150 (LGVVLSAVVIITGCFSYYQEA). Topologically, residues 151–286 (KSSKIMESFK…GGQTPIAAEI (136 aa)) are cytoplasmic. Residues 214–233 (SSLTGESEPQTRSPDFTNEN) are disordered. Residue Ser226 is modified to Phosphoserine. Position 258 is a phosphotyrosine (Tyr258). A helical membrane pass occupies residues 287–306 (EHFIHIITGVAVFLGVSFFI). Residues 307–318 (LSLILEYTWLEA) lie on the Extracellular side of the membrane. The chain crosses the membrane as a helical span at residues 319-336 (VIFLIGIIVANVPEGLLA). Over 337-770 (TVTVCLTLTA…EEGRLIFDNL (434 aa)) the chain is Cytoplasmic. The active-site 4-aspartylphosphate intermediate is Asp374. Residues Ser450 and Ser482 each carry the phosphoserine modification. ATP is bound at residue Lys485. Tyr540 carries the post-translational modification Phosphotyrosine. The tract at residues 594–715 (RAAVPDAVGK…QGAIVAVTGD (122 aa)) is mediates interaction with SCN7A. Residue Lys659 is modified to N6-succinyllysine. A phosphoserine mark is found at Ser666 and Ser673. The Mg(2+) site is built by Asp715 and Asp719. A helical transmembrane segment spans residues 771–790 (KKSIAYTLTSNIPEITPFLI). The Extracellular portion of the chain corresponds to 791-800 (FIIANIPLPL). Residues 801-821 (GTVTILCIDLGTDMVPAISLA) traverse the membrane as a helical segment. Residues 822 to 841 (YEQAESDIMKRQPRNPKTDK) lie on the Cytoplasmic side of the membrane. The chain crosses the membrane as a helical span at residues 842 to 864 (LVNEQLISMAYGQIGMIQALGGF). Residues 865 to 916 (FTYFVILAENGFLPIHLLGLRVNWDDRWINDVEDSYGQQWTYEQRKIVEFTC) lie on the Extracellular side of the membrane. The helical transmembrane segment at 917–936 (HTPFFVTIVVVQWADLVICK) threads the bilayer. Residues 937 to 949 (TRRNSVFQQGMKN) are Cytoplasmic-facing. Ser941 is subject to Phosphoserine; by PKA. A helical membrane pass occupies residues 950-968 (KILIFGLFEETALAAFLSY). Over 969–983 (CPGMGVALRMYPLKP) the chain is Extracellular. The chain crosses the membrane as a helical span at residues 984–1004 (TWWFCAFPYSLLIFVYDEVRK). Topologically, residues 1005-1021 (LIIRRRPGGWVEKETYY) are cytoplasmic.

Belongs to the cation transport ATPase (P-type) (TC 3.A.3) family. Type IIC subfamily. In terms of assembly, the sodium/potassium-transporting ATPase is composed of a catalytic alpha subunit, an auxiliary non-catalytic beta subunit and an additional regulatory subunit. Interacts with regulatory subunit FXYD1. Interacts with regulatory subunit FXYD3. Interacts with SIK1. Interacts with SLC35G1 and STIM1. Interacts with CLN3; this interaction regulates the sodium/potassium-transporting ATPase complex localization at the plasma membrane. Interacts with SCN7A; activates ATP1A1 P-type sodium:potassium-exchanging transporter activity which indirectly signals to nearby neurons to regulate sodium homeostasis. Phosphorylation on Tyr-10 modulates pumping activity. Phosphorylation of Ser-941 by PKA modulates the response of ATP1A1 to PKC. Dephosphorylation by protein phosphatase 2A (PP2A) following increases in intracellular sodium, leading to increase catalytic activity.

Its subcellular location is the cell membrane. It is found in the basolateral cell membrane. It localises to the sarcolemma. The protein localises to the cell projection. The protein resides in the axon. Its subcellular location is the melanosome. It catalyses the reaction K(+)(out) + Na(+)(in) + ATP + H2O = K(+)(in) + Na(+)(out) + ADP + phosphate + H(+). This is the catalytic component of the active enzyme, which catalyzes the hydrolysis of ATP coupled with the exchange of sodium and potassium ions across the plasma membrane. This action creates the electrochemical gradient of sodium and potassium ions, providing the energy for active transport of various nutrients. Could also be part of an osmosensory signaling pathway that senses body-fluid sodium levels and controls salt intake behavior as well as voluntary water intake to regulate sodium homeostasis. The sequence is that of Sodium/potassium-transporting ATPase subunit alpha-1 (ATP1A1) from Sus scrofa (Pig).